The primary structure comprises 126 residues: MSAPNPKAFPLADATLTNQILDLIQQASHYKQLKKGANEATKTLNRGICEFIVMAADVEPIEIVLHLPLLCEDKNVPYVFVPSKTALGRACGVSRPVVSASVTTNEARELQSQIQTVKLAIERLLI.

Belongs to the eukaryotic ribosomal protein eL8 family. In terms of assembly, component of the U3 snoRNP particle. Binds to the C'/D and B/C motifs in U3 snoRNA. Component of the 25S U4/U6.U5 tri-snRNP particle, a subcomplex of the spliceosome. Binds to the 5' stem-loop of U4 snRNA.

The protein localises to the nucleus. It localises to the nucleolus. Functionally, common component of the spliceosome and rRNA processing machinery. In association with the spliceosomal U4/U6.U5 tri-snRNP particle, required for splicing of pre-mRNA. In association with box C/D snoRNPs, required for processing of pre-ribosomal RNA (rRNA) and site-specific 2'-O-methylation of substrate RNAs. Essential for the accumulation and stability of U4 snRNA, U6 snRNA, and box C/D snoRNAs. The chain is 13 kDa ribonucleoprotein-associated protein (SNU13) from Mycosarcoma maydis (Corn smut fungus).